Here is a 94-residue protein sequence, read N- to C-terminus: Putative regulatory protein Sfum_3631 (94 aa).

It belongs to the RemA family.

The polypeptide is Putative regulatory protein Sfum_3631 (Syntrophobacter fumaroxidans (strain DSM 10017 / MPOB)).